The primary structure comprises 446 residues: SPARC-related modular calcium-binding protein 2 (446 aa).

An N-terminal signal peptide occupies residues 1–21 (MLLPQLCWLPLLAGLLPPVPA). The Kazal-like domain maps to 34-86 (QDKDKDCSLDCAGSPQKPLCASDGRTFLSRCEFQRAKCKDPQLEIAYRGNCKD). 6 disulfides stabilise this stretch: Cys40–Cys71, Cys44–Cys64, Cys53–Cys84, Cys90–Cys113, Cys124–Cys131, and Cys133–Cys153. The Thyroglobulin type-1 1 domain occupies 87–153 (VSRCVAERKY…TAVAHKTPRC (67 aa)). Positions 147 to 228 (AHKTPRCPGS…EHQSALEEAK (82 aa)) are disordered. A compositionally biased stretch (basic and acidic residues) spans 161 to 172 (LPQREGTGKTDD). The N-linked (GlcNAc...) asparagine glycan is linked to Asn206. Positions 206–216 (NKTNKNSVSSC) are enriched in polar residues. Residues 213-281 (VSSCDQEHQS…TSTRYEQPKC (69 aa)) form the Thyroglobulin type-1 2 domain. Cystine bridges form between Cys216-Cys240, Cys251-Cys258, and Cys260-Cys281. Residues 217–228 (DQEHQSALEEAK) show a composition bias toward basic and acidic residues. 2 consecutive EF-hand domains span residues 347-382 (LEER…LRKK) and 384-419 (KPKK…AKED). Positions 360, 362, 364, 366, 371, 397, 399, 401, 403, and 408 each coordinate Ca(2+). Asn362 is a glycosylation site (N-linked (GlcNAc...) asparagine). A disordered region spans residues 416–446 (AKEDGKADTKKRHTPRGHAESTSNRQPRKQG).

As to quaternary structure, binds various proteins from the extracellular matrix.

It localises to the secreted. Its subcellular location is the extracellular space. The protein resides in the extracellular matrix. The protein localises to the basement membrane. Functionally, promotes matrix assembly and cell adhesiveness. Can stimulate endothelial cell proliferation, migration, as well as angiogenesis. The polypeptide is SPARC-related modular calcium-binding protein 2 (SMOC2) (Homo sapiens (Human)).